Here is a 723-residue protein sequence, read N- to C-terminus: uncharacterized protein (723 aa).

Residues 1–12 show a composition bias toward basic residues; it reads MTGKKKNRHQKK. 4 disordered regions span residues 1-166, 181-212, 268-289, and 391-455; these read MTGK…EKEI, IKRK…SGWG, LPLS…DNDN, and KNKS…NTST. The segment covering 30 to 42 has biased composition (low complexity); that stretch reads DETTTTTTTTTTT. Basic and acidic residues-rich tracts occupy residues 45–129 and 149–166; these read EETK…KTDD and TDIK…EKEI. Residues 53-173 are a coiled coil; that stretch reads IVENKDEDKK…KEIEDPNKKY (121 aa). Basic residues predominate over residues 181–190; that stretch reads IKRKKEKKVK. The segment covering 193–204 has biased composition (pro residues); it reads PVQPTPPVPAPA. The span at 272–288 shows a compositional bias: acidic residues; sequence DTEDSDNDNDNGGDDND. The span at 397–455 shows a compositional bias: low complexity; that stretch reads DENNNNNNNNNQQQPQQQQTTSPTLSTSPTSPKSPTTTTTNTTTTTTTNTNNNNNNTST.

This is an uncharacterized protein from Dictyostelium discoideum (Social amoeba).